The sequence spans 734 residues: Photosystem I P700 chlorophyll a apoprotein A2 (734 aa).

Transmembrane regions (helical) follow at residues 46–69, 135–158, 175–199, 273–291, 330–353, 369–395, 417–439, and 517–535; these read IFASHFGHLAVIFLWTSGNLFHVA, LYAGSLFLLFLAGVFLFAGWLHLQ, LNHHLSGLFGFSSLAWSAHLIHVAI, IAHHHLAIGVVFIFAGHMY, LHFQLGLALASLGVITSLVAQHMY, SALYTHHQYIAGFLMVGAFAHGAIFFV, AIISHLSWVSLFLGFHTLGIYVH, and FLIHHAIALALHTTTLILV. Residues Cys-559 and Cys-568 each coordinate [4Fe-4S] cluster. 2 helical membrane-spanning segments follow: residues 575-596 and 643-665; these read AFYLSMFWMLNTIGWVTFYWHW and LSVWSWMFLFGHLIWATGFMFLI. 3 residues coordinate chlorophyll a: His-654, Met-662, and Tyr-670. Position 671 (Trp-671) interacts with phylloquinone. Residues 707 to 727 form a helical membrane-spanning segment; that stretch reads LVGLIHFTAGYIFTYAAFVIA.

The protein belongs to the PsaA/PsaB family. The PsaA/B heterodimer binds the P700 chlorophyll special pair and subsequent electron acceptors. PSI consists of a core antenna complex that captures photons, and an electron transfer chain that converts photonic excitation into a charge separation. The eukaryotic PSI reaction center is composed of at least 11 subunits. P700 is a chlorophyll a/chlorophyll a' dimer, A0 is one or more chlorophyll a, A1 is one or both phylloquinones and FX is a shared 4Fe-4S iron-sulfur center. is required as a cofactor.

The protein resides in the plastid. The protein localises to the chloroplast thylakoid membrane. It catalyses the reaction reduced [plastocyanin] + hnu + oxidized [2Fe-2S]-[ferredoxin] = oxidized [plastocyanin] + reduced [2Fe-2S]-[ferredoxin]. Functionally, psaA and PsaB bind P700, the primary electron donor of photosystem I (PSI), as well as the electron acceptors A0, A1 and FX. PSI is a plastocyanin/cytochrome c6-ferredoxin oxidoreductase, converting photonic excitation into a charge separation, which transfers an electron from the donor P700 chlorophyll pair to the spectroscopically characterized acceptors A0, A1, FX, FA and FB in turn. Oxidized P700 is reduced on the lumenal side of the thylakoid membrane by plastocyanin or cytochrome c6. In Rhodomonas salina (Cryptomonas salina), this protein is Photosystem I P700 chlorophyll a apoprotein A2.